The chain runs to 137 residues: Basic phospholipase A2 homolog Ts-R6 (137 aa).

The signal sequence occupies residues Met-1–Gly-16. Intrachain disulfides connect Cys-42/Cys-130, Cys-44/Cys-60, Cys-59/Cys-110, Cys-65/Cys-137, Cys-66/Cys-103, Cys-73/Cys-97, and Cys-91/Cys-101.

Expressed by the venom gland.

The protein resides in the secreted. Its function is as follows. Snake venom phospholipase A2 homolog that induces local edema a few hours after injection (5-10 ug) in the hind paw and shows weak anticoagulant and myotoxic activities. This Trimeresurus stejnegeri (Chinese green tree viper) protein is Basic phospholipase A2 homolog Ts-R6.